The primary structure comprises 163 residues: Cyanate hydratase (163 aa).

Catalysis depends on residues R103, E106, and S129.

This sequence belongs to the cyanase family.

The enzyme catalyses cyanate + hydrogencarbonate + 3 H(+) = NH4(+) + 2 CO2. Functionally, catalyzes the reaction of cyanate with bicarbonate to produce ammonia and carbon dioxide. This chain is Cyanate hydratase, found in Talaromyces stipitatus (strain ATCC 10500 / CBS 375.48 / QM 6759 / NRRL 1006) (Penicillium stipitatum).